A 356-amino-acid polypeptide reads, in one-letter code: Alpha-N-acetylneuraminide alpha-2,8-sialyltransferase (356 aa).

The Cytoplasmic segment spans residues 1–29; the sequence is MSPCGRARRQTSRGAMAVLAWKFPRTRLP. The chain crosses the membrane as a helical; Signal-anchor for type II membrane protein span at residues 30 to 48; it reads MGASALCVVVLCWLYIFPV. At 49–356 the chain is on the lumenal side; that stretch reads YRLPNEKEIV…CEDTSLQPTS (308 aa). 2 N-linked (GlcNAc...) asparagine glycosylation sites follow: Asn71 and Asn119. 2 disulfides stabilise this stretch: Cys138/Cys287 and Cys152/Cys347. Asn143 and Asn166 together coordinate CMP-N-acetyl-beta-neuraminate. 2 N-linked (GlcNAc...) asparagine glycosylation sites follow: Asn214 and Asn245. The CMP-N-acetyl-beta-neuraminate site is built by Ser274, Thr275, Gly276, Trp296, and His310. His322 (proton donor/acceptor) is an active-site residue.

It belongs to the glycosyltransferase 29 family.

It localises to the golgi apparatus membrane. The catalysed reaction is an N-acetyl-alpha-neuraminyl-(2-&gt;3)-beta-D-galactosyl derivative + CMP-N-acetyl-beta-neuraminate = an N-acetyl-alpha-neuraminyl-(2-&gt;8)-N-acetyl-alpha-neuraminyl-(2-&gt;3)-beta-D-galactosyl derivative + CMP + H(+). The enzyme catalyses a ganglioside GM3 (d18:1(4E)) + CMP-N-acetyl-beta-neuraminate = a ganglioside GD3 (d18:1(4E)) + CMP + H(+). It carries out the reaction a ganglioside GD3 (d18:1(4E)) + CMP-N-acetyl-beta-neuraminate = a ganglioside GT3 (d18:1(4E)) + CMP + H(+). It catalyses the reaction a ganglioside GD1a (d18:1(4E)) + CMP-N-acetyl-beta-neuraminate = a ganglioside GT1a (d18:1(4E)) + CMP + H(+). The catalysed reaction is a ganglioside GT1b (d18:1(4E)) + CMP-N-acetyl-beta-neuraminate = a ganglioside GQ1b (d18:1(4E)) + CMP + H(+). The enzyme catalyses a ganglioside GM1b (d18:1(4E)) + CMP-N-acetyl-beta-neuraminate = a ganglioside GD1c (d18:1(4E)) + CMP + H(+). It carries out the reaction a ganglioside GD3 + CMP-N-acetyl-beta-neuraminate = a ganglioside GT3 + CMP + H(+). It catalyses the reaction [alpha-N-acetylneuraminyl-(2-&gt;8)](n)-alpha-N-acetylneuraminyl-(2-&gt;8)-alpha-N-acetylneuraminyl-(2-&gt;3)-beta-D-galactosyl-(1-&gt;4)-beta-D-glucosyl-(1&lt;-&gt;1)-ceramide + CMP-N-acetyl-beta-neuraminate = [alpha-N-acetylneuraminyl-(2-&gt;8)](n+1)-alpha-N-acetylneuraminyl-(2-&gt;8)-alpha-N-acetylneuraminyl-(2-&gt;3)-beta-D-galactosyl-(1-&gt;4)-beta-D-glucosyl-(1&lt;-&gt;1)-ceramide + CMP + H(+). The protein operates within protein modification; protein glycosylation. Its pathway is lipid metabolism; sphingolipid metabolism. Functionally, catalyzes the addition of sialic acid in alpha 2,8-linkage to the sialic acid moiety of the ganglioside GM3 to form ganglioside GD3; gangliosides are a subfamily of complex glycosphingolipds that contain one or more residues of sialic acid. Can catalyze the addition of a second alpha-2,8- sialic acid to GD3 to form GT3. Can use GM1b, GD1a and GT1b as acceptor substrates to synthesize GD1c, GT1a and GQ1b respectively. The polypeptide is Alpha-N-acetylneuraminide alpha-2,8-sialyltransferase (Pan troglodytes (Chimpanzee)).